A 261-amino-acid polypeptide reads, in one-letter code: Cytochrome c oxidase subunit 3 (261 aa).

Topologically, residues 1-15 (MTHQTHAYHMVNPSP) are mitochondrial matrix. Residues 16-34 (WPLTGALSALLMTSGLIMW) traverse the membrane as a helical segment. The Mitochondrial intermembrane portion of the chain corresponds to 35–40 (FHFNST). Residues 41–66 (TLLMLGLTTNMLTMYQWWRDVIREST) traverse the membrane as a helical segment. Residues 67–72 (FQGHHT) are Mitochondrial matrix-facing. A helical membrane pass occupies residues 73 to 105 (PNVQKGLRYGMILFIISEVLFFTGFFWAFYHSS). Residues 106–128 (LAPTPELGGCWPPTGIHPLNPLE) lie on the Mitochondrial intermembrane side of the membrane. Residues 129–152 (VPLLNTSVLLASGVSITWAHHSLM) traverse the membrane as a helical segment. The Mitochondrial matrix segment spans residues 153-155 (EGN). A helical transmembrane segment spans residues 156 to 183 (RNHMLQALFITIALGVYFTLLQASEYYE). The Mitochondrial intermembrane segment spans residues 184–190 (APFTISD). A helical membrane pass occupies residues 191–223 (GVYGSTFFVATGFHGLHVIIGSTFLIVCFFRQL). Topologically, residues 224-232 (KFHFTSNHH) are mitochondrial matrix. A helical transmembrane segment spans residues 233–256 (FGFEAAAWYWHFVDVVWLFLYVSI). Residues 257–261 (YWWGS) are Mitochondrial intermembrane-facing.

Belongs to the cytochrome c oxidase subunit 3 family. As to quaternary structure, component of the cytochrome c oxidase (complex IV, CIV), a multisubunit enzyme composed of 14 subunits. The complex is composed of a catalytic core of 3 subunits MT-CO1, MT-CO2 and MT-CO3, encoded in the mitochondrial DNA, and 11 supernumerary subunits COX4I, COX5A, COX5B, COX6A, COX6B, COX6C, COX7A, COX7B, COX7C, COX8 and NDUFA4, which are encoded in the nuclear genome. The complex exists as a monomer or a dimer and forms supercomplexes (SCs) in the inner mitochondrial membrane with NADH-ubiquinone oxidoreductase (complex I, CI) and ubiquinol-cytochrome c oxidoreductase (cytochrome b-c1 complex, complex III, CIII), resulting in different assemblies (supercomplex SCI(1)III(2)IV(1) and megacomplex MCI(2)III(2)IV(2)).

Its subcellular location is the mitochondrion inner membrane. It catalyses the reaction 4 Fe(II)-[cytochrome c] + O2 + 8 H(+)(in) = 4 Fe(III)-[cytochrome c] + 2 H2O + 4 H(+)(out). Functionally, component of the cytochrome c oxidase, the last enzyme in the mitochondrial electron transport chain which drives oxidative phosphorylation. The respiratory chain contains 3 multisubunit complexes succinate dehydrogenase (complex II, CII), ubiquinol-cytochrome c oxidoreductase (cytochrome b-c1 complex, complex III, CIII) and cytochrome c oxidase (complex IV, CIV), that cooperate to transfer electrons derived from NADH and succinate to molecular oxygen, creating an electrochemical gradient over the inner membrane that drives transmembrane transport and the ATP synthase. Cytochrome c oxidase is the component of the respiratory chain that catalyzes the reduction of oxygen to water. Electrons originating from reduced cytochrome c in the intermembrane space (IMS) are transferred via the dinuclear copper A center (CU(A)) of subunit 2 and heme A of subunit 1 to the active site in subunit 1, a binuclear center (BNC) formed by heme A3 and copper B (CU(B)). The BNC reduces molecular oxygen to 2 water molecules using 4 electrons from cytochrome c in the IMS and 4 protons from the mitochondrial matrix. This Antilope cervicapra (Blackbuck) protein is Cytochrome c oxidase subunit 3 (MT-CO3).